The chain runs to 202 residues: 3-isopropylmalate dehydratase small subunit (202 aa).

Belongs to the LeuD family. LeuD type 1 subfamily. Heterodimer of LeuC and LeuD.

It catalyses the reaction (2R,3S)-3-isopropylmalate = (2S)-2-isopropylmalate. Its pathway is amino-acid biosynthesis; L-leucine biosynthesis; L-leucine from 3-methyl-2-oxobutanoate: step 2/4. Catalyzes the isomerization between 2-isopropylmalate and 3-isopropylmalate, via the formation of 2-isopropylmaleate. The protein is 3-isopropylmalate dehydratase small subunit of Rhizobium etli (strain CIAT 652).